Reading from the N-terminus, the 201-residue chain is Small ribosomal subunit protein uS4c (201 aa).

The region spanning 89 to 150 (MRLDNIVFRL…RQKSQAIITK (62 aa)) is the S4 RNA-binding domain.

This sequence belongs to the universal ribosomal protein uS4 family. As to quaternary structure, part of the 30S ribosomal subunit. Contacts protein S5. The interaction surface between S4 and S5 is involved in control of translational fidelity.

Its subcellular location is the plastid. It localises to the chloroplast. Functionally, one of the primary rRNA binding proteins, it binds directly to 16S rRNA where it nucleates assembly of the body of the 30S subunit. Its function is as follows. With S5 and S12 plays an important role in translational accuracy. The polypeptide is Small ribosomal subunit protein uS4c (rps4) (Funaria hygrometrica (Moss)).